Consider the following 362-residue polypeptide: GTPase Obg (362 aa).

In terms of domain architecture, Obg spans 1–159; it reads MKFLDEAKVY…KTIWLRLKLI (159 aa). In terms of domain architecture, OBG-type G spans 160 to 327; it reads ADAGLVGLPN…VLRALRDVIV (168 aa). GTP contacts are provided by residues 166–173, 191–195, 212–215, 279–282, and 308–310; these read GLPNAGKS, FTTLH, DIPG, SQID, and SAV. 2 residues coordinate Mg(2+): Ser-173 and Thr-193. A disordered region spans residues 332 to 362; it reads EEKPAKVPKLRHRDMIVSDEGEGEDGADDQP. Positions 348–362 are enriched in acidic residues; sequence VSDEGEGEDGADDQP.

It belongs to the TRAFAC class OBG-HflX-like GTPase superfamily. OBG GTPase family. In terms of assembly, monomer. The cofactor is Mg(2+).

It is found in the cytoplasm. Its function is as follows. An essential GTPase which binds GTP, GDP and possibly (p)ppGpp with moderate affinity, with high nucleotide exchange rates and a fairly low GTP hydrolysis rate. Plays a role in control of the cell cycle, stress response, ribosome biogenesis and in those bacteria that undergo differentiation, in morphogenesis control. The protein is GTPase Obg of Rhizobium etli (strain CIAT 652).